The following is a 203-amino-acid chain: Cupin-domain-containing oxidoreductase fogC (203 aa).

Residues 105-171 are cupin-like domain; it reads DFAPGVESPL…GNGTLPGRML (67 aa).

The protein belongs to the virC family.

It functions in the pathway secondary metabolite biosynthesis. Cupin-domain-containing oxidoreductase; part of the gene cluster that mediates the biosynthesis of flavoglaucin and congeners (including aspergin, dihydroauroglaucin and auroglaucin), prenylated salicylaldehyde derivatives carrying a saturated or an unsaturated C-7 side chain. The PKS fogA releases the carboxylic acid (8E,10E,12E)-3,5,7-trihydroxytetradeca-8,10,12-trienoic acid as its product, as well as derivatives with one and two double bonds. FogA is indeed able to reduce the initial triketide, thus being at least partially responsible for the differently saturated heptyl side chains of flavoglaucin congeners. The oxidoreductases fogB, fogC and fogD modify the nascent polyketide in fogA-bound form and, together, fogA, fogB, fogC and fogD are necessary for the formation of the aromatic core and the cyclized PKS products are released as salicyl alcohols. In particular, fogB is responsible for oxidation of a hydroxyl group or reduction of remaining double bond(s) at the C-7 residue whereas fogD is probably involved in the reductive release of the modified PKS products. The cytochrome P450 monooxygenase fogE is then responsible for the hydroxylation at C-3 of the benzene ring. The fogE products are substrates of the prenyltransferase fogH and the prenylated benzyl alcohols are subsequently oxidized by the fogF to produce the final aryl aldehydes flavoglaucin and congeners. The short-chain dehydrogenase fogG does not seem to be involved in the biosynthesis of the prenylated salicylaldehyde derivatives. This is Cupin-domain-containing oxidoreductase fogC from Aspergillus ruber (strain CBS 135680).